Consider the following 421-residue polypeptide: MVTIVLGAQFGDEGKGKITDLLSQCATLCCRAAGGHNAGHTIVHDDITYDFHILPSGLISPDCINLVGTGTVVHVPSFFKELDALKAKGLKEADKRIFISDRAQVCFDLHSVVDGLEEAILAGKKVGTTGKGIGPCYSDKASRRGVRIGEVLEEGVVESKLRALEAGYRRQFGELKYDLEDEVKRFNEYRTKLQPYVVDQMAFMHKHRSSPSVLVEGANALLLDIDHGTYPYVTSSCTGLGGAIQGLTLNPTSIKSIVGVVKAYSTRVGSGPFPTEQNNAVGEKLQKAGREFGVTTGRRRRCGWLDMVMCRYSNAINHYTVINLTKLDILDDFDEIKVAVAYKLDGKLLESFPAQADVLDKVEVEYVTFPGWKSNTMGATKWEHLPTNAQRYVEFIEREMGGVPIRWIGTGPARNHMIERI.

GTP is bound by residues 11–17 and 39–41; these read GDEGKGK and GHT. The active-site Proton acceptor is D12. The Mg(2+) site is built by D12 and G39. Residues 12–15, 37–40, T129, R143, N219, T234, and R298 each bind IMP; these read DEGK and NAGH. The Proton donor role is filled by H40. Position 294-300 (294-300) interacts with substrate; sequence VTTGRRR. GTP-binding positions include R300, 326-328, and 409-411; these read KLD and GTG.

It belongs to the adenylosuccinate synthetase family. In terms of assembly, homodimer. Requires Mg(2+) as cofactor.

It is found in the cytoplasm. The enzyme catalyses IMP + L-aspartate + GTP = N(6)-(1,2-dicarboxyethyl)-AMP + GDP + phosphate + 2 H(+). Its pathway is purine metabolism; AMP biosynthesis via de novo pathway; AMP from IMP: step 1/2. Functionally, plays an important role in the de novo pathway and in the salvage pathway of purine nucleotide biosynthesis. Catalyzes the first committed step in the biosynthesis of AMP from IMP. The protein is Adenylosuccinate synthetase of Paracoccidioides lutzii (strain ATCC MYA-826 / Pb01) (Paracoccidioides brasiliensis).